The chain runs to 567 residues: Proline--tRNA ligase (567 aa).

This sequence belongs to the class-II aminoacyl-tRNA synthetase family. ProS type 1 subfamily. Homodimer.

The protein localises to the cytoplasm. It carries out the reaction tRNA(Pro) + L-proline + ATP = L-prolyl-tRNA(Pro) + AMP + diphosphate. Functionally, catalyzes the attachment of proline to tRNA(Pro) in a two-step reaction: proline is first activated by ATP to form Pro-AMP and then transferred to the acceptor end of tRNA(Pro). As ProRS can inadvertently accommodate and process non-cognate amino acids such as alanine and cysteine, to avoid such errors it has two additional distinct editing activities against alanine. One activity is designated as 'pretransfer' editing and involves the tRNA(Pro)-independent hydrolysis of activated Ala-AMP. The other activity is designated 'posttransfer' editing and involves deacylation of mischarged Ala-tRNA(Pro). The misacylated Cys-tRNA(Pro) is not edited by ProRS. The protein is Proline--tRNA ligase of Staphylococcus epidermidis (strain ATCC 35984 / DSM 28319 / BCRC 17069 / CCUG 31568 / BM 3577 / RP62A).